The primary structure comprises 105 residues: Large ribosomal subunit protein uL24 (105 aa).

It belongs to the universal ribosomal protein uL24 family. Part of the 50S ribosomal subunit.

In terms of biological role, one of two assembly initiator proteins, it binds directly to the 5'-end of the 23S rRNA, where it nucleates assembly of the 50S subunit. Its function is as follows. One of the proteins that surrounds the polypeptide exit tunnel on the outside of the subunit. The protein is Large ribosomal subunit protein uL24 of Clostridium botulinum (strain Langeland / NCTC 10281 / Type F).